Here is a 344-residue protein sequence, read N- to C-terminus: Putative [LysW]-lysine/[LysW]-ornithine hydrolase (344 aa).

His66 contacts Zn(2+). The active site involves Asp68. Zn(2+) is bound at residue Asp90. The Proton acceptor role is filled by Glu117. Residues Glu118, Glu139, and His297 each contribute to the Zn(2+) site.

The protein belongs to the peptidase M20A family. LysK subfamily. Zn(2+) is required as a cofactor. Requires Co(2+) as cofactor.

It localises to the cytoplasm. It catalyses the reaction [amino-group carrier protein]-C-terminal-gamma-(L-lysyl)-L-glutamate + H2O = [amino-group carrier protein]-C-terminal-L-glutamate + L-lysine. The catalysed reaction is [amino-group carrier protein]-C-terminal-gamma-(L-ornithyl)-L-glutamate + H2O = [amino-group carrier protein]-C-terminal-L-glutamate + L-ornithine. Its pathway is amino-acid biosynthesis; L-lysine biosynthesis via AAA pathway; L-lysine from L-alpha-aminoadipate (Thermus route): step 5/5. It functions in the pathway amino-acid biosynthesis; L-arginine biosynthesis. Its function is as follows. Catalyzes the release of L-lysine from [LysW]-gamma-L-lysine and the release of L-ornithine from [LysW]-L-ornithine. The sequence is that of Putative [LysW]-lysine/[LysW]-ornithine hydrolase from Thermococcus kodakarensis (strain ATCC BAA-918 / JCM 12380 / KOD1) (Pyrococcus kodakaraensis (strain KOD1)).